The chain runs to 157 residues: Ribosomal RNA large subunit methyltransferase H (157 aa).

Residues G106 and 125-130 (LSEMTF) contribute to the S-adenosyl-L-methionine site.

The protein belongs to the RNA methyltransferase RlmH family. Homodimer.

Its subcellular location is the cytoplasm. The enzyme catalyses pseudouridine(1915) in 23S rRNA + S-adenosyl-L-methionine = N(3)-methylpseudouridine(1915) in 23S rRNA + S-adenosyl-L-homocysteine + H(+). Specifically methylates the pseudouridine at position 1915 (m3Psi1915) in 23S rRNA. The chain is Ribosomal RNA large subunit methyltransferase H from Syntrophobacter fumaroxidans (strain DSM 10017 / MPOB).